We begin with the raw amino-acid sequence, 345 residues long: Uroporphyrinogen decarboxylase (345 aa).

Substrate-binding positions include 27-31 (RQAGR), Phe-46, Asp-76, Tyr-152, Ser-207, and His-321.

This sequence belongs to the uroporphyrinogen decarboxylase family. Homodimer.

It is found in the cytoplasm. It carries out the reaction uroporphyrinogen III + 4 H(+) = coproporphyrinogen III + 4 CO2. The protein operates within porphyrin-containing compound metabolism; protoporphyrin-IX biosynthesis; coproporphyrinogen-III from 5-aminolevulinate: step 4/4. Catalyzes the decarboxylation of four acetate groups of uroporphyrinogen-III to yield coproporphyrinogen-III. The sequence is that of Uroporphyrinogen decarboxylase from Staphylococcus aureus (strain bovine RF122 / ET3-1).